Consider the following 714-residue polypeptide: Phenylalanine 2-monooxygenase precursor (714 aa).

The propeptide at 1–15 (MGVTVIPRLLGLKDE) is removed in mature form; occupies the channel of the substrate amino acid from the outside of the protein to the interior flavin ring in the precursor. FAD is bound by residues glycine 2, glycine 68, and 95–96 (EA). Residues 108–109 (IK) constitute a propeptide, linker peptide. FAD-binding positions include arginine 120, 141 to 144 (GAMR), and valine 375. Arginine 144 provides a ligand contact to substrate. Tyrosine 537 provides a ligand contact to substrate. Residues 652 to 653 (SD) and 660 to 662 (GWL) each bind FAD. Glycine 660 contacts substrate.

This sequence belongs to the phenylalanine 2-monooxygenase family. As to quaternary structure, heterotetramer composed of 2 alpha and 2 beta subunits. FAD is required as a cofactor. In terms of processing, proteolytically cleaved to yield the active enzyme. Cleavage of the linkage between the 2 subunits causes reshaping of the oxygen channel and the hydrophobic environment around the flavin ring. Removal of the prosequence causes opening of the amino acid channel.

It catalyses the reaction L-phenylalanine + O2 = 2-phenylacetamide + CO2 + H2O. Catalyzes both oxygenative decarboxylation and oxidative deamination, depending on the substrate used. Has high activity for L-Phe and L-Tyr, but relatively low activities for L-Met and L-Trp. L-Phe is mainly oxygenated and L-Met is mainly oxidized. This Pseudomonas sp protein is Phenylalanine 2-monooxygenase precursor.